Here is a 370-residue protein sequence, read N- to C-terminus: DNA replication and repair protein RecF (370 aa).

33-40 (GPNAAGKT) provides a ligand contact to ATP.

The protein belongs to the RecF family.

It is found in the cytoplasm. The RecF protein is involved in DNA metabolism; it is required for DNA replication and normal SOS inducibility. RecF binds preferentially to single-stranded, linear DNA. It also seems to bind ATP. The polypeptide is DNA replication and repair protein RecF (Moorella thermoacetica (strain ATCC 39073 / JCM 9320)).